The following is a 96-amino-acid chain: Small ribosomal subunit protein bS6 (96 aa).

It belongs to the bacterial ribosomal protein bS6 family.

Binds together with bS18 to 16S ribosomal RNA. The sequence is that of Small ribosomal subunit protein bS6 from Streptococcus sanguinis (strain SK36).